A 209-amino-acid polypeptide reads, in one-letter code: Molybdenum cofactor guanylyltransferase (209 aa).

GTP is bound by residues 13–15, K26, N54, D74, and D104; that span reads LAG. Residue D104 participates in Mg(2+) binding.

Belongs to the MobA family. In terms of assembly, monomer. The cofactor is Mg(2+).

The protein localises to the cytoplasm. It carries out the reaction Mo-molybdopterin + GTP + H(+) = Mo-molybdopterin guanine dinucleotide + diphosphate. Its function is as follows. Transfers a GMP moiety from GTP to Mo-molybdopterin (Mo-MPT) cofactor (Moco or molybdenum cofactor) to form Mo-molybdopterin guanine dinucleotide (Mo-MGD) cofactor. In Acinetobacter baumannii (strain ATCC 17978 / DSM 105126 / CIP 53.77 / LMG 1025 / NCDC KC755 / 5377), this protein is Molybdenum cofactor guanylyltransferase.